The chain runs to 172 residues: Adenine phosphoribosyltransferase (172 aa).

The protein belongs to the purine/pyrimidine phosphoribosyltransferase family. In terms of assembly, homodimer.

The protein localises to the cytoplasm. The catalysed reaction is AMP + diphosphate = 5-phospho-alpha-D-ribose 1-diphosphate + adenine. It participates in purine metabolism; AMP biosynthesis via salvage pathway; AMP from adenine: step 1/1. Functionally, catalyzes a salvage reaction resulting in the formation of AMP, that is energically less costly than de novo synthesis. The protein is Adenine phosphoribosyltransferase of Gloeothece citriformis (strain PCC 7424) (Cyanothece sp. (strain PCC 7424)).